Consider the following 278-residue polypeptide: Cation-dependent mannose-6-phosphate receptor (278 aa).

The N-terminal stretch at 1-21 is a signal peptide; that stretch reads MFPFSGCWRTELLLLLLLAVA. Residues 22–186 are Lumenal-facing; the sequence is VRESWQIEEK…SLACSPEVSH (165 aa). Residues 31-182 enclose the MRH domain; that stretch reads KSCDLVGEKD…EMDSSLACSP (152 aa). Residues Cys33 and Cys79 are joined by a disulfide bond. Residues Asn58, Asn84, Asn95, Asn108, and Asn114 are each glycosylated (N-linked (GlcNAc...) asparagine). Cystine bridges form between Cys133–Cys168 and Cys146–Cys180. Residues 187-211 form a helical membrane-spanning segment; the sequence is LSVGSILLVIFASLVAVYIIGGFLY. At 212-278 the chain is on the cytoplasmic side; that stretch reads QRLVVGAKGM…EERDDHLLPM (67 aa). The interval 257–278 is disordered; it reads RGVGDDQLGEESEERDDHLLPM. Ser268 carries the post-translational modification Phosphoserine.

In terms of assembly, homodimer. Binds GGA1, GGA2 and GGA3.

It is found in the lysosome membrane. In terms of biological role, transport of phosphorylated lysosomal enzymes from the Golgi complex and the cell surface to lysosomes. Lysosomal enzymes bearing phosphomannosyl residues bind specifically to mannose-6-phosphate receptors in the Golgi apparatus and the resulting receptor-ligand complex is transported to an acidic prelyosomal compartment where the low pH mediates the dissociation of the complex. The protein is Cation-dependent mannose-6-phosphate receptor (M6pr) of Mus musculus (Mouse).